We begin with the raw amino-acid sequence, 601 residues long: Elongation factor 4 (601 aa).

Residues 5–187 (IRKKNFCIIA…AICKHVPSPR (183 aa)) form the tr-type G domain. Residues 17-22 (DHGKST) and 134-137 (NKID) contribute to the GTP site.

This sequence belongs to the TRAFAC class translation factor GTPase superfamily. Classic translation factor GTPase family. LepA subfamily.

The protein localises to the cell inner membrane. It carries out the reaction GTP + H2O = GDP + phosphate + H(+). In terms of biological role, required for accurate and efficient protein synthesis under certain stress conditions. May act as a fidelity factor of the translation reaction, by catalyzing a one-codon backward translocation of tRNAs on improperly translocated ribosomes. Back-translocation proceeds from a post-translocation (POST) complex to a pre-translocation (PRE) complex, thus giving elongation factor G a second chance to translocate the tRNAs correctly. Binds to ribosomes in a GTP-dependent manner. This chain is Elongation factor 4, found in Borrelia garinii subsp. bavariensis (strain ATCC BAA-2496 / DSM 23469 / PBi) (Borreliella bavariensis).